A 72-amino-acid chain; its full sequence is Probable neurotoxin pcD-996 (72 aa).

Positions 1–19 (MNYLVMISFALLLVIGVES) are cleaved as a signal peptide. The 52-residue stretch at 21-72 (RDGYFVEPDNCLVYCMPSPEICDRGCKRYGATSGFCKEFSKGENFCWCKGLR) folds into the LCN-type CS-alpha/beta domain. 3 cysteine pairs are disulfide-bonded: Cys35-Cys56, Cys42-Cys66, and Cys46-Cys68. Position 72 (Arg72) is a propeptide, removed by a carboxypeptidase.

Belongs to the long (3 C-C) scorpion toxin superfamily. As to expression, expressed by the venom gland.

It is found in the secreted. The polypeptide is Probable neurotoxin pcD-996 (Androctonus australis (Sahara scorpion)).